A 104-amino-acid polypeptide reads, in one-letter code: MRSLLCAPLLLLLLSAGESAVITGACDKDLQCGEGMCCAVSLWIRSIRICTPLGSSGEDCHPLSHKVPFDGQRKHHTCPCLPNLVCGQTSPGKHKCLPEFKNVF.

An N-terminal signal peptide occupies residues 1-19 (MRSLLCAPLLLLLLSAGES). Intrachain disulfides connect Cys26-Cys38, Cys32-Cys50, Cys37-Cys78, Cys60-Cys86, and Cys80-Cys96.

This sequence belongs to the AVIT (prokineticin) family. As to expression, expressed by the venom gland.

It localises to the secreted. Its function is as follows. Potent agonist for both PKR1/PROKR1 and PKR2/PROKR2. Potently contracts gastrointestinal (GI) smooth muscle. This chain is AVIToxin-VAR2, found in Varanus varius (Lace monitor lizard).